A 239-amino-acid chain; its full sequence is ATP synthase subunit a (239 aa).

5 helical membrane-spanning segments follow: residues 17 to 37, 75 to 95, 113 to 133, 182 to 202, and 206 to 226; these read GTVC…VYFF, FHLL…IGLI, DPFV…LFGV, LLTL…PLAI, and MVWI…FVTL.

Belongs to the ATPase A chain family. F-type ATPases have 2 components, CF(1) - the catalytic core - and CF(0) - the membrane proton channel. CF(1) has five subunits: alpha(3), beta(3), gamma(1), delta(1), epsilon(1). CF(0) has three main subunits: a(1), b(2) and c(9-12). The alpha and beta chains form an alternating ring which encloses part of the gamma chain. CF(1) is attached to CF(0) by a central stalk formed by the gamma and epsilon chains, while a peripheral stalk is formed by the delta and b chains.

Its subcellular location is the cell membrane. In terms of biological role, key component of the proton channel; it plays a direct role in the translocation of protons across the membrane. This Enterococcus hirae (strain ATCC 9790 / DSM 20160 / JCM 8729 / LMG 6399 / NBRC 3181 / NCIMB 6459 / NCDO 1258 / NCTC 12367 / WDCM 00089 / R) protein is ATP synthase subunit a.